Reading from the N-terminus, the 444-residue chain is Homocysteine/cysteine synthase (444 aa).

Lys208 bears the N6-(pyridoxal phosphate)lysine mark.

The protein belongs to the trans-sulfuration enzymes family. Homotetramer. Pyridoxal 5'-phosphate serves as cofactor.

It is found in the cytoplasm. The catalysed reaction is O-acetyl-L-homoserine + methanethiol = L-methionine + acetate + H(+). It carries out the reaction O-acetyl-L-homoserine + hydrogen sulfide = L-homocysteine + acetate. It catalyses the reaction O-acetyl-L-serine + hydrogen sulfide = L-cysteine + acetate. It functions in the pathway amino-acid biosynthesis; L-methionine biosynthesis via de novo pathway; L-homocysteine from O-acetyl-L-homoserine. It participates in amino-acid biosynthesis; L-cysteine biosynthesis; L-cysteine from L-serine: step 2/2. In terms of biological role, catalyzes the conversion of O-acetyl-L-homoserine (OAH) into homocysteine in the methionine biosynthesis pathway. Also catalyzes the conversion of O-acetylserine (OAS) into cysteine, the last step in the cysteine biosynthesis pathway. The polypeptide is Homocysteine/cysteine synthase (MET17) (Kluyveromyces lactis (strain ATCC 8585 / CBS 2359 / DSM 70799 / NBRC 1267 / NRRL Y-1140 / WM37) (Yeast)).